Consider the following 65-residue polypeptide: Large ribosomal subunit protein bL35 (65 aa).

The disordered stretch occupies residues 1–26; the sequence is MPKIKTVRGAAKRFKKTASGGFKRKQ. A compositionally biased stretch (basic residues) spans 10–26; that stretch reads AAKRFKKTASGGFKRKQ.

It belongs to the bacterial ribosomal protein bL35 family.

This is Large ribosomal subunit protein bL35 from Actinobacillus pleuropneumoniae serotype 7 (strain AP76).